We begin with the raw amino-acid sequence, 159 residues long: 6,7-dimethyl-8-ribityllumazine synthase (159 aa).

Residues phenylalanine 22, 57 to 59, and 81 to 83 contribute to the 5-amino-6-(D-ribitylamino)uracil site; these read AVE and AVI. A (2S)-2-hydroxy-3-oxobutyl phosphate-binding site is contributed by 86-87; that stretch reads GT. Residue histidine 89 is the Proton donor of the active site. Residue phenylalanine 114 coordinates 5-amino-6-(D-ribitylamino)uracil. Arginine 128 provides a ligand contact to (2S)-2-hydroxy-3-oxobutyl phosphate.

The protein belongs to the DMRL synthase family. As to quaternary structure, forms an icosahedral capsid composed of 60 subunits, arranged as a dodecamer of pentamers.

The enzyme catalyses (2S)-2-hydroxy-3-oxobutyl phosphate + 5-amino-6-(D-ribitylamino)uracil = 6,7-dimethyl-8-(1-D-ribityl)lumazine + phosphate + 2 H2O + H(+). The protein operates within cofactor biosynthesis; riboflavin biosynthesis; riboflavin from 2-hydroxy-3-oxobutyl phosphate and 5-amino-6-(D-ribitylamino)uracil: step 1/2. In terms of biological role, catalyzes the formation of 6,7-dimethyl-8-ribityllumazine by condensation of 5-amino-6-(D-ribitylamino)uracil with 3,4-dihydroxy-2-butanone 4-phosphate. This is the penultimate step in the biosynthesis of riboflavin. The chain is 6,7-dimethyl-8-ribityllumazine synthase from Shewanella baltica (strain OS155 / ATCC BAA-1091).